We begin with the raw amino-acid sequence, 189 residues long: Chitin synthase 2 (189 aa).

Belongs to the chitin synthase family. Class II subfamily.

The protein localises to the cell membrane. It carries out the reaction [(1-&gt;4)-N-acetyl-beta-D-glucosaminyl](n) + UDP-N-acetyl-alpha-D-glucosamine = [(1-&gt;4)-N-acetyl-beta-D-glucosaminyl](n+1) + UDP + H(+). In terms of biological role, polymerizes chitin, a structural polymer of the cell wall and septum, by transferring the sugar moiety of UDP-GlcNAc to the non-reducing end of the growing chitin polymer. The chain is Chitin synthase 2 (chs2) from Aspergillus niger.